We begin with the raw amino-acid sequence, 235 residues long: MIYAGILAGGTGTRMGISNLPKQFLELGDRPILIHTIEKFVLEPSIEKIVVGVHGDWVSHAEDLVDKYLPLYKERIIITKGGADRNTSIKKIIEAIDAYRPLTPEDIVVTHDSVRPFITLRMIQDNIQLAQNHDAVDTVVEAVDTIVESTNGQFITDIPNRAHLYQGQTPQTFRCKDFMDLYGSLSDEEKEIWTDACKIFVIKGKDVALAKGEYSNLKITTVTDLKIAKSMIEKD.

CTP contacts are provided by residues Leu7–Gly10, Gly82–Ser88, and Ser113.

The protein belongs to the IspD/TarI cytidylyltransferase family. TarI subfamily.

The enzyme catalyses D-ribitol 5-phosphate + CTP + H(+) = CDP-L-ribitol + diphosphate. It functions in the pathway cell wall biogenesis; poly(ribitol phosphate) teichoic acid biosynthesis. In terms of biological role, catalyzes the transfer of the cytidylyl group of CTP to D-ribitol 5-phosphate. The polypeptide is Ribitol-5-phosphate cytidylyltransferase (Streptococcus pneumoniae (strain CGSP14)).